Here is a 517-residue protein sequence, read N- to C-terminus: ATP synthase subunit alpha 1 (517 aa).

An ATP-binding site is contributed by 174–181 (GDRQTGKT).

The protein belongs to the ATPase alpha/beta chains family. F-type ATPases have 2 components, CF(1) - the catalytic core - and CF(0) - the membrane proton channel. CF(1) has five subunits: alpha(3), beta(3), gamma(1), delta(1), epsilon(1). CF(0) has three main subunits: a(1), b(2) and c(9-12). The alpha and beta chains form an alternating ring which encloses part of the gamma chain. CF(1) is attached to CF(0) by a central stalk formed by the gamma and epsilon chains, while a peripheral stalk is formed by the delta and b chains.

The protein resides in the cell inner membrane. It carries out the reaction ATP + H2O + 4 H(+)(in) = ADP + phosphate + 5 H(+)(out). Functionally, produces ATP from ADP in the presence of a proton gradient across the membrane. The alpha chain is a regulatory subunit. This chain is ATP synthase subunit alpha 1, found in Albidiferax ferrireducens (strain ATCC BAA-621 / DSM 15236 / T118) (Rhodoferax ferrireducens).